Here is a 324-residue protein sequence, read N- to C-terminus: Protein translocase subunit SecF (324 aa).

6 helical membrane-spanning segments follow: residues 16–36 (FFWA…ASLV), 145–165 (LIRS…VYIW), 174–194 (LGSV…FALF), 201–221 (TTVA…VVVF), 247–269 (TLSR…LVFG), and 276–295 (FVFA…VYMA).

The protein belongs to the SecD/SecF family. SecF subfamily. Forms a complex with SecD. Part of the essential Sec protein translocation apparatus which comprises SecA, SecYEG and auxiliary proteins SecDF-YajC and YidC.

The protein localises to the cell inner membrane. Functionally, part of the Sec protein translocase complex. Interacts with the SecYEG preprotein conducting channel. SecDF uses the proton motive force (PMF) to complete protein translocation after the ATP-dependent function of SecA. The protein is Protein translocase subunit SecF of Cereibacter sphaeroides (strain ATCC 17023 / DSM 158 / JCM 6121 / CCUG 31486 / LMG 2827 / NBRC 12203 / NCIMB 8253 / ATH 2.4.1.) (Rhodobacter sphaeroides).